The sequence spans 414 residues: Enolase (414 aa).

A (2R)-2-phosphoglycerate-binding site is contributed by Gln156. Catalysis depends on Glu200, which acts as the Proton donor. 3 residues coordinate Mg(2+): Asp236, Glu281, and Asp308. (2R)-2-phosphoglycerate contacts are provided by Lys333, Arg362, Ser363, and Lys384. The active-site Proton acceptor is the Lys333.

The protein belongs to the enolase family. The cofactor is Mg(2+).

The protein localises to the cytoplasm. The protein resides in the secreted. It is found in the cell surface. It catalyses the reaction (2R)-2-phosphoglycerate = phosphoenolpyruvate + H2O. It functions in the pathway carbohydrate degradation; glycolysis; pyruvate from D-glyceraldehyde 3-phosphate: step 4/5. In terms of biological role, catalyzes the reversible conversion of 2-phosphoglycerate (2-PG) into phosphoenolpyruvate (PEP). It is essential for the degradation of carbohydrates via glycolysis. This chain is Enolase, found in Methanosphaera stadtmanae (strain ATCC 43021 / DSM 3091 / JCM 11832 / MCB-3).